Here is a 314-residue protein sequence, read N- to C-terminus: Olfactory receptor 1E2 (314 aa).

Topologically, residues 1 to 25 (MMGQNQTSISDFLLLGLPIQPEQQN) are extracellular. Asn5 is a glycosylation site (N-linked (GlcNAc...) asparagine). Residues 26-49 (LCYALFLAMYLTTLLGNLLIIVLI) traverse the membrane as a helical segment. The Cytoplasmic segment spans residues 50–57 (RLDSHLHT). A helical membrane pass occupies residues 58-79 (PMYLFLSNLSFSDLCFSSVTIP). Topologically, residues 80–100 (KLLQNMQNQDPSIPYADCLTQ) are extracellular. A disulfide bridge connects residues Cys97 and Cys189. Residues 101–120 (MYFFLLFGDLESFLLVAMAY) form a helical membrane-spanning segment. The Cytoplasmic segment spans residues 121 to 139 (DRYVAICFPLHYTAIMSPM). A helical membrane pass occupies residues 140–158 (LCLSLVALSWVLTTFHAML). Residues 159 to 195 (HTLLMARLCFCADNVIPHFFCDMSALLKLACSDTRVN) lie on the Extracellular side of the membrane. Residues 196–219 (EWVIFIMGGLIVVIPFLLILGSYA) traverse the membrane as a helical segment. Residues 220–236 (RIVSSILKVPSSKGICK) are Cytoplasmic-facing. Residues 237–259 (AFSTCGSHLSVVSLFYGTIIGLY) traverse the membrane as a helical segment. Residues 260-272 (LCPSANSSTLKET) are Extracellular-facing. Asn265 carries an N-linked (GlcNAc...) asparagine glycan. A helical membrane pass occupies residues 273–292 (VMAMMYTVVTPMLNPFIYSL). The Cytoplasmic portion of the chain corresponds to 293-314 (RNRDMKGALERVICKRKNPFLL).

This sequence belongs to the G-protein coupled receptor 1 family.

The protein resides in the cell membrane. Its function is as follows. Odorant receptor. This Gorilla gorilla gorilla (Western lowland gorilla) protein is Olfactory receptor 1E2 (OR1E2).